The sequence spans 430 residues: Aspartate aminotransferase, mitochondrial (430 aa).

The transit peptide at M1–A29 directs the protein to the mitochondrion. The residue at position 48 (T48) is a Phosphothreonine. K59 is subject to N6-acetyllysine. G65 provides a ligand contact to substrate. An N6-acetyllysine; alternate modification is found at K73. N6-succinyllysine; alternate is present on K73. K82 carries the N6-acetyllysine modification. K90 carries the N6-acetyllysine; alternate modification. K90 is modified (N6-succinyllysine; alternate). A 3'-nitrotyrosine; alternate modification is found at Y96. Position 96 is a phosphotyrosine; alternate (Y96). N6-acetyllysine; alternate occurs at positions 107, 122, and 159. N6-succinyllysine; alternate is present on residues K107, K122, and K159. Residue W162 coordinates substrate. An N6-acetyllysine; alternate modification is found at K185. Residue K185 is modified to N6-succinyllysine; alternate. N215 contacts substrate. At K227 the chain carries N6-succinyllysine. K234 carries the post-translational modification N6-acetyllysine. N6-acetyllysine; alternate occurs at positions 279 and 296. K279 carries the N6-(pyridoxal phosphate)lysine; alternate modification. Residue K296 is modified to N6-succinyllysine; alternate. K302 is modified (N6-acetyllysine). K309 is subject to N6-acetyllysine; alternate. At K309 the chain carries N6-succinyllysine; alternate. The residue at position 313 (R313) is an Asymmetric dimethylarginine. K345 carries the post-translational modification N6-acetyllysine. Residue K363 is modified to N6-acetyllysine; alternate. An N6-succinyllysine; alternate modification is found at K363. N6-acetyllysine occurs at positions 364 and 387. An N6-acetyllysine; alternate mark is found at K396 and K404. 2 positions are modified to N6-succinyllysine; alternate: K396 and K404. Substrate is bound at residue R407.

The protein belongs to the class-I pyridoxal-phosphate-dependent aminotransferase family. In terms of assembly, homodimer. It depends on pyridoxal 5'-phosphate as a cofactor.

It localises to the mitochondrion matrix. The protein localises to the cell membrane. It carries out the reaction L-aspartate + 2-oxoglutarate = oxaloacetate + L-glutamate. The enzyme catalyses L-kynurenine + 2-oxoglutarate = kynurenate + L-glutamate + H2O. Functionally, catalyzes the irreversible transamination of the L-tryptophan metabolite L-kynurenine to form kynurenic acid (KA). As a member of the malate-aspartate shuttle, it has a key role in the intracellular NAD(H) redox balance. Is important for metabolite exchange between mitochondria and cytosol, and for amino acid metabolism. Facilitates cellular uptake of long-chain free fatty acids. In Sus scrofa (Pig), this protein is Aspartate aminotransferase, mitochondrial (GOT2).